Reading from the N-terminus, the 275-residue chain is Large ribosomal subunit protein uL2 (275 aa).

A disordered region spans residues 224-275 (AMNPVDHPHGGGEAKAGQGNPHPVTPWGVPTKGYKTRKNKRTQQFIVRDRRG).

Belongs to the universal ribosomal protein uL2 family. Part of the 50S ribosomal subunit. Forms a bridge to the 30S subunit in the 70S ribosome.

Functionally, one of the primary rRNA binding proteins. Required for association of the 30S and 50S subunits to form the 70S ribosome, for tRNA binding and peptide bond formation. It has been suggested to have peptidyltransferase activity; this is somewhat controversial. Makes several contacts with the 16S rRNA in the 70S ribosome. This is Large ribosomal subunit protein uL2 from Xanthomonas axonopodis pv. citri (strain 306).